The chain runs to 218 residues: Ribose-5-phosphate isomerase A (218 aa).

Residues 28 to 31 (TGST), 81 to 84 (DGAD), and 94 to 97 (KGGG) each bind substrate. E103 serves as the catalytic Proton acceptor. K121 contributes to the substrate binding site.

Belongs to the ribose 5-phosphate isomerase family. As to quaternary structure, homodimer.

It catalyses the reaction aldehydo-D-ribose 5-phosphate = D-ribulose 5-phosphate. It participates in carbohydrate degradation; pentose phosphate pathway; D-ribose 5-phosphate from D-ribulose 5-phosphate (non-oxidative stage): step 1/1. In terms of biological role, catalyzes the reversible conversion of ribose-5-phosphate to ribulose 5-phosphate. This chain is Ribose-5-phosphate isomerase A, found in Colwellia psychrerythraea (strain 34H / ATCC BAA-681) (Vibrio psychroerythus).